The primary structure comprises 121 residues: MSHLTDLPPWAALLVCGLMLVGAATTLIGSLGLLRLPDFYARLHAPTIATSGGTILLCLASILCFAVLQSRWVFHEVLIIFFVTVTTPVTLMLLGQATLYRDRFEEQQGVPRKQKPAPGEE.

3 helical membrane-spanning segments follow: residues 10-32 (WAALLVCGLMLVGAATTLIGSLG), 45-67 (APTIATSGGTILLCLASILCFAV), and 72-94 (WVFHEVLIIFFVTVTTPVTLMLL).

This sequence belongs to the CPA3 antiporters (TC 2.A.63) subunit G family. As to quaternary structure, may form a hetero-oligomeric complex that consists of six subunits: PhaAB, PhaC, PhaD, PhaE, PhaF and PhaG.

The protein resides in the cell membrane. Functionally, part of a K(+) efflux system which is required for the adaptation of R.meliloti to alkaline pH as well as for the infection process during symbiotic nodule development. The polypeptide is Probable K(+)/H(+) antiporter subunit G (phaG) (Rhizobium meliloti (strain 1021) (Ensifer meliloti)).